A 116-amino-acid polypeptide reads, in one-letter code: Nascent polypeptide-associated complex protein (116 aa).

One can recognise an NAC-A/B domain in the interval 6-70; sequence PKQMKDLERM…AREESKQQQK (65 aa).

It belongs to the NAC-alpha family. As to quaternary structure, homodimer. Interacts with the ribosome. Binds ribosomal RNA.

Contacts the emerging nascent chain on the ribosome. The chain is Nascent polypeptide-associated complex protein from Sulfolobus acidocaldarius (strain ATCC 33909 / DSM 639 / JCM 8929 / NBRC 15157 / NCIMB 11770).